A 293-amino-acid polypeptide reads, in one-letter code: Acetyl-coenzyme A carboxylase carboxyl transferase subunit beta (293 aa).

The CoA carboxyltransferase N-terminal domain maps to 29–293; the sequence is LWVKCSECSQ…GVKELAEANT (265 aa). Zn(2+) is bound by residues cysteine 33, cysteine 36, cysteine 52, and cysteine 55. The C4-type zinc finger occupies 33 to 55; sequence CSECSQVAYRKDLISNFNVCNNC.

It belongs to the AccD/PCCB family. Acetyl-CoA carboxylase is a heterohexamer composed of biotin carboxyl carrier protein (AccB), biotin carboxylase (AccC) and two subunits each of ACCase subunit alpha (AccA) and ACCase subunit beta (AccD). It depends on Zn(2+) as a cofactor.

Its subcellular location is the cytoplasm. It carries out the reaction N(6)-carboxybiotinyl-L-lysyl-[protein] + acetyl-CoA = N(6)-biotinyl-L-lysyl-[protein] + malonyl-CoA. The protein operates within lipid metabolism; malonyl-CoA biosynthesis; malonyl-CoA from acetyl-CoA: step 1/1. In terms of biological role, component of the acetyl coenzyme A carboxylase (ACC) complex. Biotin carboxylase (BC) catalyzes the carboxylation of biotin on its carrier protein (BCCP) and then the CO(2) group is transferred by the transcarboxylase to acetyl-CoA to form malonyl-CoA. In Prochlorococcus marinus (strain AS9601), this protein is Acetyl-coenzyme A carboxylase carboxyl transferase subunit beta.